The primary structure comprises 212 residues: Thymidylate kinase (212 aa).

10–17 (GIDGCGKT) contributes to the ATP binding site.

It belongs to the thymidylate kinase family.

It catalyses the reaction dTMP + ATP = dTDP + ADP. In terms of biological role, phosphorylation of dTMP to form dTDP in both de novo and salvage pathways of dTTP synthesis. The protein is Thymidylate kinase of Synechococcus sp. (strain RCC307).